The primary structure comprises 253 residues: Adapter protein MecA (253 aa).

This sequence belongs to the MecA family. In terms of assembly, homodimer.

Functionally, enables the recognition and targeting of unfolded and aggregated proteins to the ClpC protease or to other proteins involved in proteolysis. The sequence is that of Adapter protein MecA from Streptococcus pyogenes serotype M6 (strain ATCC BAA-946 / MGAS10394).